A 380-amino-acid chain; its full sequence is Probable inactive dehydrogenase easA (380 aa).

Residues 25–27, alanine 60, glutamine 102, and histidine 171 contribute to the FMN site; that span reads PMT. Substrate-binding residues include histidine 171 and asparagine 174. FMN contacts are provided by residues lysine 223, glycine 299, 324 to 325, and arginine 325; that span reads GR. Position 352 (tyrosine 352) interacts with substrate.

The protein belongs to the NADH:flavin oxidoreductase/NADH oxidase family.

Functionally, probable inactive dehydrogenase; part of the gene cluster that mediates the biosynthesis of fungal ergot alkaloid. DmaW catalyzes the first step of ergot alkaloid biosynthesis by condensing dimethylallyl diphosphate (DMAP) and tryptophan to form 4-dimethylallyl-L-tryptophan. The second step is catalyzed by the methyltransferase easF that methylates 4-dimethylallyl-L-tryptophan in the presence of S-adenosyl-L-methionine, resulting in the formation of 4-dimethylallyl-L-abrine. The catalase easC and the FAD-dependent oxidoreductase easE then transform 4-dimethylallyl-L-abrine to chanoclavine-I which is further oxidized by easD in the presence of NAD(+), resulting in the formation of chanoclavine-I aldehyde. Agroclavine dehydrogenase easG then mediates the conversion of chanoclavine-I aldehyde to agroclavine via a non-enzymatic adduct reaction: the substrate is an iminium intermediate that is formed spontaneously from chanoclavine-I aldehyde in the presence of glutathione. The presence of easA is not required to complete this reaction. Further conversion of agroclavine to paspalic acid is a two-step process involving oxidation of agroclavine to elymoclavine and of elymoclavine to paspalic acid, the second step being performed by the elymoclavine oxidase cloA. Paspalic acid is then further converted to D-lysergic acid. Ergopeptines are assembled from D-lysergic acid and three different amino acids by the D-lysergyl-peptide-synthetases composed each of a monomudular and a trimodular nonribosomal peptide synthetase subunit. LpsB and lpsC encode the monomodular subunits responsible for D-lysergic acid activation and incorporation into the ergopeptine backbone. LpsA1 and A2 subunits encode the trimodular nonribosomal peptide synthetase assembling the tripeptide portion of ergopeptines. LpsA1 is responsible for formation of the major ergopeptine, ergotamine, and lpsA2 for alpha-ergocryptine, the minor ergopeptine of the total alkaloid mixture elaborated by C.purpurea. D-lysergyl-tripeptides are assembled by the nonribosomal peptide synthetases and released as N-(D-lysergyl-aminoacyl)-lactams. Cyclolization of the D-lysergyl-tripeptides is performed by the Fe(2+)/2-ketoglutarate-dependent dioxygenase easH which introduces a hydroxyl group into N-(D-lysergyl-aminoacyl)-lactam at alpha-C of the aminoacyl residue followed by spontaneous condensation with the terminal lactam carbonyl group. The chain is Probable inactive dehydrogenase easA from Claviceps purpurea (Ergot fungus).